The sequence spans 76 residues: uncharacterized protein (76 aa).

This is an uncharacterized protein from Human cytomegalovirus (strain AD169) (HHV-5).